The sequence spans 122 residues: Large ribosomal subunit protein uL14c (122 aa).

Belongs to the universal ribosomal protein uL14 family. Part of the 50S ribosomal subunit.

It localises to the plastid. Its subcellular location is the chloroplast. Functionally, binds to 23S rRNA. The sequence is that of Large ribosomal subunit protein uL14c from Ipomoea purpurea (Common morning glory).